The primary structure comprises 158 residues: Ribosome biogenesis protein ALB1 (158 aa).

The segment covering 1-18 has biased composition (polar residues); that stretch reads MPSKNSINRPKLTVNLNK. A disordered region spans residues 1–51; it reads MPSKNSINRPKLTVNLNKKSQRLGQKRADRERKGLLQPERSSEASKSGEIK. Over residues 26-49 the composition is skewed to basic and acidic residues; that stretch reads KRADRERKGLLQPERSSEASKSGE.

Belongs to the ALB1 family. As to quaternary structure, component of the nucleoplasmic and cytoplasmic pre-60S ribosomal particles.

Its subcellular location is the cytoplasm. The protein resides in the nucleus. In terms of biological role, involved in proper assembly of pre-ribosomal particles during the biogenesis of the 60S ribosomal subunit. Accompanies the pre-60S particles to the cytoplasm. The protein is Ribosome biogenesis protein ALB1 (ALB1) of Vanderwaltozyma polyspora (strain ATCC 22028 / DSM 70294 / BCRC 21397 / CBS 2163 / NBRC 10782 / NRRL Y-8283 / UCD 57-17) (Kluyveromyces polysporus).